The chain runs to 48 residues: uncharacterized protein (48 aa).

This is an uncharacterized protein from Saccharomyces cerevisiae (strain ATCC 204508 / S288c) (Baker's yeast).